The chain runs to 525 residues: D-3-phosphoglycerate dehydrogenase (525 aa).

NAD(+) is bound by residues R148–I149, D168, T200, C227–R229, and D253. R229 is a catalytic residue. The active site involves E258. The active-site Proton donor is the H276. H276 to A279 serves as a coordination point for NAD(+). An ACT domain is found at L452–L524.

Belongs to the D-isomer specific 2-hydroxyacid dehydrogenase family.

The catalysed reaction is (2R)-3-phosphoglycerate + NAD(+) = 3-phosphooxypyruvate + NADH + H(+). It carries out the reaction (R)-2-hydroxyglutarate + NAD(+) = 2-oxoglutarate + NADH + H(+). It functions in the pathway amino-acid biosynthesis; L-serine biosynthesis; L-serine from 3-phospho-D-glycerate: step 1/3. Its activity is regulated as follows. In bacteria displays feedback inhibition by L-serine. Functionally, catalyzes the reversible oxidation of 3-phospho-D-glycerate to 3-phosphonooxypyruvate, the first step of the phosphorylated L-serine biosynthesis pathway. Also catalyzes the reversible oxidation of 2-hydroxyglutarate to 2-oxoglutarate. In Bacillus subtilis (strain 168), this protein is D-3-phosphoglycerate dehydrogenase (serA).